Reading from the N-terminus, the 176-residue chain is ATP-dependent protease subunit HslV (176 aa).

The active site involves T5. G161, C164, and T167 together coordinate Na(+).

This sequence belongs to the peptidase T1B family. HslV subfamily. A double ring-shaped homohexamer of HslV is capped on each side by a ring-shaped HslU homohexamer. The assembly of the HslU/HslV complex is dependent on binding of ATP.

It is found in the cytoplasm. It carries out the reaction ATP-dependent cleavage of peptide bonds with broad specificity.. With respect to regulation, allosterically activated by HslU binding. Its function is as follows. Protease subunit of a proteasome-like degradation complex believed to be a general protein degrading machinery. The polypeptide is ATP-dependent protease subunit HslV (Wolinella succinogenes (strain ATCC 29543 / DSM 1740 / CCUG 13145 / JCM 31913 / LMG 7466 / NCTC 11488 / FDC 602W) (Vibrio succinogenes)).